Reading from the N-terminus, the 1789-residue chain is Protein sprint (1789 aa).

Disordered stretches follow at residues 53 to 120 (TTAN…AHPP), 140 to 190 (TTTA…DLAN), 218 to 237 (PLWNARNGNGSTTTHCHPTG), 261 to 317 (QRMH…QAGL), 329 to 378 (LNNN…DADD), and 401 to 460 (RRSR…PCDL). Positions 82–114 (SINNNKNNNISNKNNNNNNNNNNNINNNNNNNN) are enriched in low complexity. Positions 140–149 (TTTANQLQQQ) are enriched in polar residues. Residues 176 to 185 (PSEEDGDTDA) show a composition bias toward acidic residues. The segment covering 223–233 (RNGNGSTTTHC) has biased composition (polar residues). Positions 295–317 (NNNNINNNHNGQQSQKSQQQAGL) are enriched in low complexity. Positions 337–361 (QPGSMTPASNRTGLDSNQNQKQNLN) are enriched in polar residues. A compositionally biased stretch (low complexity) spans 409–418 (QSRTSLVSSS). The segment covering 428 to 445 (TSSEDDEEEPVEAEDEGE) has biased composition (acidic residues). One can recognise an SH2 domain in the interval 473 to 566 (WFLPGIQRSG…ELPVQLMLPR (94 aa)). Disordered regions lie at residues 632–689 (FFSD…SGGQ), 744–787 (TAPE…SANG), 852–918 (GECK…ILES), 969–1006 (DLLAETPSTPTPTQQSHLTPCEEETTATPNESSSQSLL), 1040–1067 (AAEDDGGDTTPTAEGQANGASRSKQGSP), 1094–1123 (RSQMLHASQRHSEPLKAGFGGSGNGAMLQP), and 1138–1160 (PKPKVSQQQQQSQQQQQPTKRAR). Over residues 639-649 (KPPPTGAPPLP) the composition is skewed to pro residues. The segment covering 671 to 686 (TPSDTTNSSLSSFTTS) has biased composition (low complexity). Over residues 857-868 (TLSSQGSSSNDS) the composition is skewed to polar residues. Over residues 903-914 (AGKESQHYKESD) the composition is skewed to basic and acidic residues. A compositionally biased stretch (low complexity) spans 974–984 (TPSTPTPTQQS). 2 stretches are compositionally biased toward polar residues: residues 994–1006 (TATPNESSSQSLL) and 1048–1065 (TTPTAEGQANGASRSKQG). Low complexity predominate over residues 1143–1154 (SQQQQQSQQQQQ). The VPS9 domain maps to 1531–1673 (RSEDIQLLAQ…LKTFMASEGE (143 aa)). One can recognise a Ras-associating domain in the interval 1689–1777 (CSSVLRVIIP…CMLAYKRIDA (89 aa)).

The protein belongs to the RIN (Ras interaction/interference) family. In terms of tissue distribution, in late cellular blastoderm embryos, it is expressed in the posterior end. Then, as development proceeds, it is expressed in the developing midgut, amnioserosa and in a specific subset of CNS neurons. Isoform 1 is expressed earlier in developing midgut and amnioserosa, but is not expressed in the CNS.

In terms of biological role, potential Ras effector protein. May function as a guanine nucleotide exchange (GEF), by exchanging bound GDP for free GTP. In Drosophila melanogaster (Fruit fly), this protein is Protein sprint (spri).